The primary structure comprises 61 residues: Sec-independent protein translocase protein TatA (61 aa).

A helical membrane pass occupies residues 2 to 22; it reads GLSGISPLSLLLILAIIVALF.

The protein belongs to the TatA/E family. In terms of assembly, the Tat system comprises two distinct complexes: a TatABC complex, containing multiple copies of TatA, TatB and TatC subunits, and a separate TatA complex, containing only TatA subunits. Substrates initially bind to the TatABC complex, which probably triggers association of the separate TatA complex to form the active translocon.

It is found in the cell inner membrane. In terms of biological role, part of the twin-arginine translocation (Tat) system that transports large folded proteins containing a characteristic twin-arginine motif in their signal peptide across membranes. TatA could form the protein-conducting channel of the Tat system. The polypeptide is Sec-independent protein translocase protein TatA (Legionella pneumophila (strain Paris)).